A 427-amino-acid polypeptide reads, in one-letter code: Glutamate-1-semialdehyde 2,1-aminomutase (427 aa).

An N6-(pyridoxal phosphate)lysine modification is found at Lys-267.

Belongs to the class-III pyridoxal-phosphate-dependent aminotransferase family. HemL subfamily. In terms of assembly, homodimer. It depends on pyridoxal 5'-phosphate as a cofactor.

The protein resides in the cytoplasm. It carries out the reaction (S)-4-amino-5-oxopentanoate = 5-aminolevulinate. The protein operates within porphyrin-containing compound metabolism; protoporphyrin-IX biosynthesis; 5-aminolevulinate from L-glutamyl-tRNA(Glu): step 2/2. The sequence is that of Glutamate-1-semialdehyde 2,1-aminomutase from Citrifermentans bemidjiense (strain ATCC BAA-1014 / DSM 16622 / JCM 12645 / Bem) (Geobacter bemidjiensis).